The following is an 84-amino-acid chain: Elongation factor 1-beta (84 aa).

Belongs to the EF-1-beta/EF-1-delta family.

Functionally, promotes the exchange of GDP for GTP in EF-1-alpha/GDP, thus allowing the regeneration of EF-1-alpha/GTP that could then be used to form the ternary complex EF-1-alpha/GTP/AAtRNA. The protein is Elongation factor 1-beta of Methanoculleus marisnigri (strain ATCC 35101 / DSM 1498 / JR1).